The following is a 1087-amino-acid chain: DYRK-family kinase pom1 (1087 aa).

Disordered regions lie at residues 57–81, 120–182, 238–308, and 336–578; these read CPNRQSSSSTAADTSPSTNASNTNI, LLRS…SKSF, MAPK…LSTI, and NHSH…PSLS. Low complexity predominate over residues 62–81; the sequence is SSSSTAADTSPSTNASNTNI. 2 stretches are compositionally biased toward polar residues: residues 132–165 and 246–256; these read KNSPRNSIHRLSNISIGNNPIDFESSQQNNPSSL and WRHTNFHSTSH. A compositionally biased stretch (low complexity) spans 292–307; sequence SGSLTKSSSESKNLST. A compositionally biased stretch (polar residues) spans 336-361; it reads NHSHVGSQTKSHSFATPSVFDNNKPV. Over residues 362–373 the composition is skewed to low complexity; the sequence is SSDNHNNTTTSS. Over residues 397–407 the composition is skewed to basic and acidic residues; that stretch reads VDGHRNHEAKH. Residues 429 to 442 are compositionally biased toward low complexity; that stretch reads RGGFFSRLSFSRSS. Residues 478–488 are compositionally biased toward basic residues; it reads NGKKTPTRTKS. Ser-513 is modified (phosphoserine). Residues 527–536 are compositionally biased toward basic and acidic residues; that stretch reads VSREPEKPEE. The span at 555-578 shows a compositional bias: polar residues; it reads QQRSVSYTPKRSSDTSESLQPSLS. Residues 699-995 form the Protein kinase domain; the sequence is YEVVDFLGKG…PQQAAQHDFL (297 aa). Residues 705–713 and Lys-728 each bind ATP; that span reads LGKGSFGQV. Asp-825 (proton acceptor) is an active-site residue. Disordered regions lie at residues 992–1011 and 1017–1056; these read HDFLTGKQDVRRPNTAPARQ and PNIETAPIPRPLPNLPMEYNDHTLPSPKEPSNQASNLVRS. Over residues 1045-1055 the composition is skewed to polar residues; that stretch reads EPSNQASNLVR.

It belongs to the protein kinase superfamily. CMGC Ser/Thr protein kinase family. MNB/DYRK subfamily. In terms of assembly, interacts with rga4. Interacts with tea4; this interaction triggers pom1 plasma membrane association. Autophosphorylates at the cell cortex to lower lipid affinity and promote membrane release. Dephosphorylation by dis2, regulated by tea4, triggers membrane association.

It localises to the cell tip. It is found in the cell membrane. It catalyses the reaction L-seryl-[protein] + ATP = O-phospho-L-seryl-[protein] + ADP + H(+). The enzyme catalyses L-threonyl-[protein] + ATP = O-phospho-L-threonyl-[protein] + ADP + H(+). The catalysed reaction is L-tyrosyl-[protein] + ATP = O-phospho-L-tyrosyl-[protein] + ADP + H(+). Functionally, polarity factor involved in localization of polarized growth and cytokinesis. Forms an intracellular gradient that serves to measure cell length and control mitotic entry. Controls the timing of mitotic commitment by regulating the inhibitory impact of cdr1/cdr2 on wee1 activity. Directly phosphorylates the tail of cdr2 which inhibits cdr2 activation by ssp1. Cdr2 phosphorylation by pom1 also modulates cdr2 association with membranes and inhibits cdr2 interaction with mid1, reducing its clustering ability, possibly via the down-regulation of cdr2 kinase activity. Acts as a negative regulator of mid1 distribution, excluding mid1 from non-growing ends, which prevents division-septum assembly at the cell ends. The pom1 polar gradient also mediates mitotic entry by regulating cdk1. Plays an essential role in proper localization and phosphorylation of a GAP for cdc42, rga4, which ensures bipolar localization of GTP-bound, active cdc42 involved in F-actin formation. Phosphorylates multiple other substrates that function in polarized cell growth, including tea4, mod5, pal1, the Rho GAP rga7, and the Arf GEF syt22. The sequence is that of DYRK-family kinase pom1 from Schizosaccharomyces pombe (strain 972 / ATCC 24843) (Fission yeast).